A 440-amino-acid chain; its full sequence is MESQQLSNYPHISHGSACASVTSKEVHTNQDPLDVSASKIQEYDKASTKANSQQTTTPASSAVPENPHHASPQPASVPPPQNGPYPQQCMMTQNQANPSGWSFYGHPSMIPYTPYQMSPMYFPPGPQSQFPQYPSSVGTPLSTPSPESGNTFTDSSSADSDMTSTKKYVRPPPMLTSPNDFPNWVKTYIKFLQNSNLGGIIPTVNGKPVRQITDDELTFLYNTFQIFAPSQFLPTWVKDILSVDYTDIMKILSKSIEKMQSDTQEANDIVTLANLQYNGSTPADAFETKVTNIIDRLNNNGIHINNKVACQLIMRGLSGEYKFLRYTRHRHLNMTVAELFLDIHAIYEEQQGSRNSKPNYRRNRSDEKNDSRSYTNTTKPKVIARNPQKTNNSKSKTARAHNVSTSINSPSTDNDSISKSTTEPIQLNNKHDLHLRPETY.

Composition is skewed to polar residues over residues 1-10, 48-60, and 127-152; these read MESQQLSNYP, TKAN…TPAS, and QSQF…GNTF. 3 disordered regions span residues 1-93, 126-173, and 352-440; these read MESQ…MMTQ, PQSQ…RPPP, and GSRN…PETY. The segment covering 153 to 165 has biased composition (low complexity); the sequence is TDSSSADSDMTST. Residues 299-401 form an RNA-binding region; the sequence is NNGIHINNKV…NSKSKTARAH (103 aa). Polar residues predominate over residues 402 to 428; it reads NVSTSINSPSTDNDSISKSTTEPIQLN. The residue at position 416 (serine 416) is a Phosphoserine. Over residues 429 to 440 the composition is skewed to basic and acidic residues; that stretch reads NKHDLHLRPETY.

In terms of assembly, homotrimer.

The protein localises to the cytoplasm. In terms of biological role, capsid protein (CA) is the structural component of the virus-like particle (VLP), forming the shell that encapsulates the retrotransposons dimeric RNA genome. The particles are assembled from trimer-clustered units and there are holes in the capsid shells that allow for the diffusion of macromolecules. CA also has nucleocapsid-like chaperone activity, promoting primer tRNA(i)-Met annealing to the multipartite primer-binding site (PBS), dimerization of Ty1 RNA and initiation of reverse transcription. This chain is Transposon Ty1-DR3 Gag polyprotein (TY1A-DR3), found in Saccharomyces cerevisiae (strain ATCC 204508 / S288c) (Baker's yeast).